The sequence spans 770 residues: Kinesin-like protein klpA (770 aa).

The interval 1-152 (MENVQSRMQG…GLGKRGEWDQ (152 aa)) is disordered. Residues 85-105 (SSTLTRSASAASRPRGPLSSS) show a composition bias toward low complexity. Over residues 106-119 (TSGRPKTSMSTSRR) the composition is skewed to polar residues. The span at 134–152 (THQEERSYGGLGKRGEWDQ) shows a compositional bias: basic and acidic residues. Positions 175 to 425 (QESSGLKDAL…QELKGNIRVF (251 aa)) form a coiled coil. The Kinesin motor domain maps to 421–756 (NIRVFCRVRP…LKFATKVHNT (336 aa)). 514–521 (GQTGSGKT) contacts ATP.

The protein belongs to the TRAFAC class myosin-kinesin ATPase superfamily. Kinesin family. NCD subfamily.

The protein localises to the cytoplasm. Its subcellular location is the cytoskeleton. This chain is Kinesin-like protein klpA (klpA), found in Emericella nidulans (strain FGSC A4 / ATCC 38163 / CBS 112.46 / NRRL 194 / M139) (Aspergillus nidulans).